A 502-amino-acid polypeptide reads, in one-letter code: 4-hydroxy-3-methylbut-2-enyl diphosphate reductase, chloroplastic (502 aa).

The transit peptide at 1–48 (MQVLPQTRVQGVPSGRNLSCSKAVGGTPLRALTRDVVRPARSVNVHVV) directs the protein to the chloroplast. Residue Cys140 participates in [4Fe-4S] cluster binding. His170 contacts (2E)-4-hydroxy-3-methylbut-2-enyl diphosphate. A [4Fe-4S] cluster-binding site is contributed by Cys232. His260 contributes to the (2E)-4-hydroxy-3-methylbut-2-enyl diphosphate binding site. The Proton donor role is filled by Glu262. Thr325 lines the (2E)-4-hydroxy-3-methylbut-2-enyl diphosphate pocket. Position 363 (Cys363) interacts with [4Fe-4S] cluster. Residues 398-400 (SSN) and Ser461 contribute to the (2E)-4-hydroxy-3-methylbut-2-enyl diphosphate site.

The protein belongs to the IspH family. As to quaternary structure, homodimer. [4Fe-4S] cluster is required as a cofactor.

It localises to the plastid. Its subcellular location is the chloroplast stroma. The catalysed reaction is dimethylallyl diphosphate + 2 oxidized [2Fe-2S]-[ferredoxin] + H2O = (2E)-4-hydroxy-3-methylbut-2-enyl diphosphate + 2 reduced [2Fe-2S]-[ferredoxin] + 2 H(+). It catalyses the reaction isopentenyl diphosphate + 2 oxidized [2Fe-2S]-[ferredoxin] + H2O = (2E)-4-hydroxy-3-methylbut-2-enyl diphosphate + 2 reduced [2Fe-2S]-[ferredoxin] + 2 H(+). The protein operates within isoprenoid biosynthesis; dimethylallyl diphosphate biosynthesis; dimethylallyl diphosphate from (2E)-4-hydroxy-3-methylbutenyl diphosphate: step 1/1. It functions in the pathway isoprenoid biosynthesis; isopentenyl diphosphate biosynthesis via DXP pathway; isopentenyl diphosphate from 1-deoxy-D-xylulose 5-phosphate: step 6/6. Functionally, enzyme of the plastid non-mevalonate pathway for isoprenoid biosynthesis that converts 1-hydroxy-2-methyl-2-(E)-butenyl 4-diphosphate into isopentenyl diphosphate (IPP) and dimethylallyl diphosphate (DMAPP). In Botryococcus braunii (Green alga), this protein is 4-hydroxy-3-methylbut-2-enyl diphosphate reductase, chloroplastic.